The sequence spans 240 residues: Intestine-specific homeobox (240 aa).

The tract at residues 36 to 82 (PTERRSLPRPQSICKEDSRQTTIPGSKLERPPQDQPQEEKKNKRRVR) is disordered. The segment covering 62–76 (KLERPPQDQPQEEKK) has biased composition (basic and acidic residues). Positions 78-137 (KRRVRTTFTTEQLQELEKLFHFTHYPDIHVRSQLASRINLPEARVQIWFQNQRAKWRKQE) form a DNA-binding region, homeobox.

In terms of tissue distribution, expressed in intestinal epithelial cells from the duodenum to the proximal colon.

Its subcellular location is the nucleus. Transcription factor that regulates gene expression in intestine. May participate in vitamin A metabolism most likely by regulating BCO1 expression in the intestine. This Mus musculus (Mouse) protein is Intestine-specific homeobox (Isx).